Here is an 814-residue protein sequence, read N- to C-terminus: Protein fam-161 (814 aa).

Residues 71–87 (ITQHRSSYKVTKSSSCH) are compositionally biased toward polar residues. Disordered stretches follow at residues 71-130 (ITQH…SWSQ), 150-255 (RHQV…ATSA), 569-610 (SRSK…THAT), and 714-814 (MKSA…SSEA). Residues 99–111 (MPRHLDLKPRSSE) are compositionally biased toward basic and acidic residues. The segment covering 174 to 193 (STAPSQVSVTSSVQSVAALS) has biased composition (low complexity). Composition is skewed to polar residues over residues 194–207 (GQNP…TPSH) and 216–235 (RTHQ…TLQN). A compositionally biased stretch (basic residues) spans 236–249 (PRHRTSSASRHHST). 2 stretches are compositionally biased toward polar residues: residues 570-583 (RSKS…NCQE) and 594-610 (ENLP…THAT). The stretch at 606–689 (STHATQLREE…LAEMKQRVLN (84 aa)) forms a coiled coil. A compositionally biased stretch (basic and acidic residues) spans 714–727 (MKSAKGRGIERVQS). The span at 728 to 745 (QEKQQSIGRRSSEVSGSG) shows a compositional bias: polar residues. Over residues 751-765 (KGYEESFESEDKSEK) the composition is skewed to basic and acidic residues. Low complexity-rich tracts occupy residues 766–779 (SGSS…SGSE) and 795–814 (SKST…SSEA).

Belongs to the FAM161 family. In terms of tissue distribution, expressed in amphid and phasmid ciliated neurons.

It localises to the cell projection. It is found in the cilium. Its subcellular location is the cytoplasm. The protein localises to the cytoskeleton. The protein resides in the cilium axoneme. This Caenorhabditis elegans protein is Protein fam-161.